Here is a 545-residue protein sequence, read N- to C-terminus: Membrane protein insertase YidC (545 aa).

Residues 6 to 26 (NLLLIALLFVSFMIWQAWQTD) traverse the membrane as a helical segment. Residues 31–54 (PVAQTTQQTSNPATGDAASSAVPA) form a disordered region. The next 4 helical transmembrane spans lie at 342–362 (KFIH…TFIV), 417–437 (LGGC…YYML), 455–475 (LSAQ…MFFI), and 496–516 (PVIF…YYIV).

This sequence belongs to the OXA1/ALB3/YidC family. Type 1 subfamily. As to quaternary structure, interacts with the Sec translocase complex via SecD. Specifically interacts with transmembrane segments of nascent integral membrane proteins during membrane integration.

It localises to the cell inner membrane. In terms of biological role, required for the insertion and/or proper folding and/or complex formation of integral membrane proteins into the membrane. Involved in integration of membrane proteins that insert both dependently and independently of the Sec translocase complex, as well as at least some lipoproteins. Aids folding of multispanning membrane proteins. In Serratia proteamaculans (strain 568), this protein is Membrane protein insertase YidC.